A 1337-amino-acid chain; its full sequence is Phosphoribosylformylglycinamidine synthase (1337 aa).

At Ser-215 the chain carries Phosphoserine. Residues 322–333 and 402–404 contribute to the ATP site; these read GATTGTGGRIRD and AGF. Residues Thr-619 and Thr-622 each carry the phosphothreonine modification. Ala-705 serves as a coordination point for ATP. Mg(2+) is bound by residues Asp-706, Glu-745, Asn-749, and Asp-908. Ser-910 provides a ligand contact to ATP. The region spanning 1063 to 1301 is the Glutamine amidotransferase type-1 domain; that stretch reads RVAILREEGS…ALMPHPERAV (239 aa). Cys-1157 (nucleophile) is an active-site residue. Catalysis depends on residues His-1296 and Glu-1298.

It in the N-terminal section; belongs to the FGAMS family.

The protein resides in the cytoplasm. It catalyses the reaction N(2)-formyl-N(1)-(5-phospho-beta-D-ribosyl)glycinamide + L-glutamine + ATP + H2O = 2-formamido-N(1)-(5-O-phospho-beta-D-ribosyl)acetamidine + L-glutamate + ADP + phosphate + H(+). It functions in the pathway purine metabolism; IMP biosynthesis via de novo pathway; 5-amino-1-(5-phospho-D-ribosyl)imidazole from N(2)-formyl-N(1)-(5-phospho-D-ribosyl)glycinamide: step 1/2. Its function is as follows. Phosphoribosylformylglycinamidine synthase involved in the purines biosynthetic pathway. Catalyzes the ATP-dependent conversion of formylglycinamide ribonucleotide (FGAR) and glutamine to yield formylglycinamidine ribonucleotide (FGAM) and glutamate. In Mus musculus (Mouse), this protein is Phosphoribosylformylglycinamidine synthase (Pfas).